The chain runs to 207 residues: Small ribosomal subunit protein uS4c (207 aa).

An S4 RNA-binding domain is found at methionine 92–isoleucine 155.

It belongs to the universal ribosomal protein uS4 family. In terms of assembly, part of the 30S ribosomal subunit. Contacts protein S5. The interaction surface between S4 and S5 is involved in control of translational fidelity.

It localises to the plastid. The protein localises to the chloroplast. Functionally, one of the primary rRNA binding proteins, it binds directly to 16S rRNA where it nucleates assembly of the body of the 30S subunit. Its function is as follows. With S5 and S12 plays an important role in translational accuracy. This chain is Small ribosomal subunit protein uS4c (rps4), found in Equisetum giganteum (Giant horsetail).